The following is a 461-amino-acid chain: tRNA modification GTPase MnmE (461 aa).

Arg20, Glu85, and Lys124 together coordinate (6S)-5-formyl-5,6,7,8-tetrahydrofolate. Residues 221-383 enclose the TrmE-type G domain; the sequence is GIPVAIIGET…LQQLLTEVSS (163 aa). Asn231 contacts K(+). GTP-binding positions include 231–236, 250–256, and 275–278; these read NAGKST, SDIHGTT, and DTAG. Ser235 contacts Mg(2+). 3 residues coordinate K(+): Ser250, Ile252, and Thr255. A Mg(2+)-binding site is contributed by Thr256. Lys461 contributes to the (6S)-5-formyl-5,6,7,8-tetrahydrofolate binding site.

The protein belongs to the TRAFAC class TrmE-Era-EngA-EngB-Septin-like GTPase superfamily. TrmE GTPase family. In terms of assembly, homodimer. Heterotetramer of two MnmE and two MnmG subunits. The cofactor is K(+).

The protein localises to the cytoplasm. Its function is as follows. Exhibits a very high intrinsic GTPase hydrolysis rate. Involved in the addition of a carboxymethylaminomethyl (cmnm) group at the wobble position (U34) of certain tRNAs, forming tRNA-cmnm(5)s(2)U34. In Parabacteroides distasonis (strain ATCC 8503 / DSM 20701 / CIP 104284 / JCM 5825 / NCTC 11152), this protein is tRNA modification GTPase MnmE.